The following is a 254-amino-acid chain: MNNILNFYPAVITTDVAENWQIGFQDPATPIMEGIINLHYDLMFFICVISVFVSWMLGRTLWHFEQNQNKIPSSLTHGTLIEMIWTVTPAFILLIIAVPSFSLLYAMDEIISPAITIKTLGHQWYWSYEYSDYLNEDDDSINYDSYMIPEEDLEIGQFRLLEVDNRMVIPINTHIRVIVTAADVLHSWAVPSFRSKCDAIPGRLNQTSLFIKREGVYYGQCSEICGINHGFMPIVVEATSLPNYVSWISNKLNE.

Over 1–37 the chain is Mitochondrial intermembrane; the sequence is MNNILNFYPAVITTDVAENWQIGFQDPATPIMEGIIN. Residues 38 to 58 form a helical membrane-spanning segment; the sequence is LHYDLMFFICVISVFVSWMLG. Residues 59–83 are Mitochondrial matrix-facing; it reads RTLWHFEQNQNKIPSSLTHGTLIEM. The chain crosses the membrane as a helical span at residues 84–104; sequence IWTVTPAFILLIIAVPSFSLL. Residues 105–254 lie on the Mitochondrial intermembrane side of the membrane; the sequence is YAMDEIISPA…VSWISNKLNE (150 aa). 6 residues coordinate Cu cation: His-186, Cys-221, Glu-223, Cys-225, His-229, and Met-232. Glu-223 serves as a coordination point for Mg(2+).

This sequence belongs to the cytochrome c oxidase subunit 2 family. In terms of assembly, component of the cytochrome c oxidase (complex IV, CIV), a multisubunit enzyme composed of a catalytic core of 3 subunits and several supernumerary subunits. The complex exists as a monomer or a dimer and forms supercomplexes (SCs) in the inner mitochondrial membrane with ubiquinol-cytochrome c oxidoreductase (cytochrome b-c1 complex, complex III, CIII). The cofactor is Cu cation.

The protein localises to the mitochondrion inner membrane. It catalyses the reaction 4 Fe(II)-[cytochrome c] + O2 + 8 H(+)(in) = 4 Fe(III)-[cytochrome c] + 2 H2O + 4 H(+)(out). Functionally, component of the cytochrome c oxidase, the last enzyme in the mitochondrial electron transport chain which drives oxidative phosphorylation. The respiratory chain contains 3 multisubunit complexes succinate dehydrogenase (complex II, CII), ubiquinol-cytochrome c oxidoreductase (cytochrome b-c1 complex, complex III, CIII) and cytochrome c oxidase (complex IV, CIV), that cooperate to transfer electrons derived from NADH and succinate to molecular oxygen, creating an electrochemical gradient over the inner membrane that drives transmembrane transport and the ATP synthase. Cytochrome c oxidase is the component of the respiratory chain that catalyzes the reduction of oxygen to water. Electrons originating from reduced cytochrome c in the intermembrane space (IMS) are transferred via the dinuclear copper A center (CU(A)) of subunit 2 and heme A of subunit 1 to the active site in subunit 1, a binuclear center (BNC) formed by heme A3 and copper B (CU(B)). The BNC reduces molecular oxygen to 2 water molecules using 4 electrons from cytochrome c in the IMS and 4 protons from the mitochondrial matrix. This Chondrus crispus (Carrageen Irish moss) protein is Cytochrome c oxidase subunit 2 (COX2).